We begin with the raw amino-acid sequence, 662 residues long: UvrABC system protein B (662 aa).

Residues 31-188 (DNIEGGEKAQ…NDLVDIQFER (158 aa)) enclose the Helicase ATP-binding domain. Residue 44 to 51 (GATGTGKT) coordinates ATP. A Beta-hairpin motif is present at residues 97–120 (YYDYYQPEAYVPSSDTYIEKDSSV). The Helicase C-terminal domain occupies 435–601 (QIDDLLGEIN…TIKKEIRDLI (167 aa)). The 36-residue stretch at 626–661 (KELVKKLEKQMQEAVEVLDFELAAQIRDMMLEVKAL) folds into the UVR domain.

This sequence belongs to the UvrB family. As to quaternary structure, forms a heterotetramer with UvrA during the search for lesions. Interacts with UvrC in an incision complex.

The protein resides in the cytoplasm. Its function is as follows. The UvrABC repair system catalyzes the recognition and processing of DNA lesions. A damage recognition complex composed of 2 UvrA and 2 UvrB subunits scans DNA for abnormalities. Upon binding of the UvrA(2)B(2) complex to a putative damaged site, the DNA wraps around one UvrB monomer. DNA wrap is dependent on ATP binding by UvrB and probably causes local melting of the DNA helix, facilitating insertion of UvrB beta-hairpin between the DNA strands. Then UvrB probes one DNA strand for the presence of a lesion. If a lesion is found the UvrA subunits dissociate and the UvrB-DNA preincision complex is formed. This complex is subsequently bound by UvrC and the second UvrB is released. If no lesion is found, the DNA wraps around the other UvrB subunit that will check the other stand for damage. The polypeptide is UvrABC system protein B (Streptococcus pneumoniae (strain Hungary19A-6)).